A 178-amino-acid chain; its full sequence is Bryoporin (178 aa).

Phosphocholine contacts are provided by Ser51, Val83, Ser102, Pro104, and Tyr134. Positions 101–117 (WSVPFDYNLYSNWWNIA) are trp-rich region.

The protein belongs to the actinoporin family. Plant subfamily.

With respect to regulation, inhibited by sphingomyelin. Actinoporin-related protein having hemolytic activity in vitro. Binds probably a phosphocholine derivative with the unique amido or hydroxyl groups found in sphingomyelin. Involved in drought tolerance. In Physcomitrium patens (Spreading-leaved earth moss), this protein is Bryoporin.